A 243-amino-acid chain; its full sequence is Probable transcriptional regulatory protein Smlt3713 (243 aa).

It belongs to the TACO1 family.

It localises to the cytoplasm. The sequence is that of Probable transcriptional regulatory protein Smlt3713 from Stenotrophomonas maltophilia (strain K279a).